We begin with the raw amino-acid sequence, 379 residues long: Cytochrome b (379 aa).

The next 4 membrane-spanning stretches (helical) occupy residues 33-53 (FGSL…FLAM), 77-98 (WLIR…YLHI), 113-133 (WNIG…GYVL), and 178-198 (FFAF…LHLL). Heme b-binding residues include histidine 83 and histidine 97. Heme b contacts are provided by histidine 182 and histidine 196. An a ubiquinone-binding site is contributed by histidine 201. Helical transmembrane passes span 226-246 (YKDL…ALFY), 288-308 (LGGV…PILH), 320-340 (ASQL…WIGG), and 347-367 (YIII…VLNP).

Belongs to the cytochrome b family. The cytochrome bc1 complex contains 3 respiratory subunits (MT-CYB, CYC1 and UQCRFS1), 2 core proteins (UQCRC1 and UQCRC2) and probably 6 low-molecular weight proteins. It depends on heme b as a cofactor.

Its subcellular location is the mitochondrion inner membrane. In terms of biological role, component of the ubiquinol-cytochrome c reductase complex (complex III or cytochrome b-c1 complex) that is part of the mitochondrial respiratory chain. The b-c1 complex mediates electron transfer from ubiquinol to cytochrome c. Contributes to the generation of a proton gradient across the mitochondrial membrane that is then used for ATP synthesis. The polypeptide is Cytochrome b (mt-cyb) (Anguilla rostrata (American eel)).